We begin with the raw amino-acid sequence, 325 residues long: LIM and senescent cell antigen-like-containing domain protein 1 (325 aa).

At Ala2 the chain carries N-acetylalanine. LIM zinc-binding domains are found at residues 10–62 (CERC…CEHD), 71–121 (CHQC…CRPC), 135–184 (CQKC…CLPC), 193–243 (CGAC…CETH), and 252–303 (CFHC…CKKC).

As to quaternary structure, component of the heterotrimeric IPP (ILK-PINCH-PARVIN) complex composed of ILK, LIMS1/PINCH and PARVA; the complex binds to F-actin via the C-terminal tail of LIMS1 and the N-terminal region of PARVA, promoting F-actin filament bundling. Formation of the IPP complex is dependent on protein kinase C and precedes integrin-mediated cell adhesion and spreading. Competes with LIMS2 for interaction with ILK. Interacts with SH3/SH2 adapter NCK2, thereby linking the complex to cell surface receptors. Interacts (via LIM zinc-binding 5) with TGFB1I1.

It is found in the cell junction. Its subcellular location is the focal adhesion. The protein resides in the cell membrane. Functionally, within the IPP (ILK-PINCH-PARVIN) complex, binds to F-actin, promoting F-actin bundling, a process required to generate force for actin cytoskeleton reorganization and subsequent dynamic cell adhesion events such as cell spreading and migration. This chain is LIM and senescent cell antigen-like-containing domain protein 1 (Lims1), found in Mus musculus (Mouse).